The chain runs to 156 residues: SsrA-binding protein (156 aa).

It belongs to the SmpB family.

The protein localises to the cytoplasm. Its function is as follows. Required for rescue of stalled ribosomes mediated by trans-translation. Binds to transfer-messenger RNA (tmRNA), required for stable association of tmRNA with ribosomes. tmRNA and SmpB together mimic tRNA shape, replacing the anticodon stem-loop with SmpB. tmRNA is encoded by the ssrA gene; the 2 termini fold to resemble tRNA(Ala) and it encodes a 'tag peptide', a short internal open reading frame. During trans-translation Ala-aminoacylated tmRNA acts like a tRNA, entering the A-site of stalled ribosomes, displacing the stalled mRNA. The ribosome then switches to translate the ORF on the tmRNA; the nascent peptide is terminated with the 'tag peptide' encoded by the tmRNA and targeted for degradation. The ribosome is freed to recommence translation, which seems to be the essential function of trans-translation. This Clostridium botulinum (strain Loch Maree / Type A3) protein is SsrA-binding protein.